The sequence spans 221 residues: uncharacterized protein (221 aa).

The segment at residues 77 to 96 is a DNA-binding region (H-T-H motif); that stretch reads YRERAVELGVPERAILVEPN.

To E.coli YdcF.

The imp locus inhibits the extrachromosomal maintenance of the streptomyces plasmid SLP1. May function as a transcriptional activator. This is an uncharacterized protein from Streptomyces coelicolor (strain ATCC BAA-471 / A3(2) / M145).